Here is a 352-residue protein sequence, read N- to C-terminus: Heat-inducible transcription repressor HrcA (352 aa).

This sequence belongs to the HrcA family.

Its function is as follows. Negative regulator of class I heat shock genes (grpE-dnaK-dnaJ and groELS operons). Prevents heat-shock induction of these operons. In Prochlorococcus marinus (strain MIT 9313), this protein is Heat-inducible transcription repressor HrcA.